A 366-amino-acid polypeptide reads, in one-letter code: 3-dehydroquinate synthase (366 aa).

NAD(+) contacts are provided by residues 74 to 79, 108 to 112, 132 to 133, Lys144, Lys153, and 171 to 174; these read SGEAAK, GVVGD, TT, and FLRT. Zn(2+) contacts are provided by Glu186, His249, and His266.

It belongs to the sugar phosphate cyclases superfamily. Dehydroquinate synthase family. Requires Co(2+) as cofactor. Zn(2+) serves as cofactor. It depends on NAD(+) as a cofactor.

The protein resides in the cytoplasm. It carries out the reaction 7-phospho-2-dehydro-3-deoxy-D-arabino-heptonate = 3-dehydroquinate + phosphate. It participates in metabolic intermediate biosynthesis; chorismate biosynthesis; chorismate from D-erythrose 4-phosphate and phosphoenolpyruvate: step 2/7. In terms of biological role, catalyzes the conversion of 3-deoxy-D-arabino-heptulosonate 7-phosphate (DAHP) to dehydroquinate (DHQ). The sequence is that of 3-dehydroquinate synthase from Geobacillus kaustophilus (strain HTA426).